A 337-amino-acid chain; its full sequence is uncharacterized protein (337 aa).

2 helical membrane passes run 4 to 24 (FIFF…FSLI) and 26 to 46 (LLLW…LFVL).

The protein belongs to the plectrovirus ORF2 family.

The protein localises to the host membrane. This is an uncharacterized protein from Spiroplasma virus SpV1-R8A2 B (SpV1).